The primary structure comprises 727 residues: MESEDTKKTQEMKTDLNLLLECLKYQMDNAFSQKEALVTIHSICQQNSNASVYFREIGGLMFVKNLAKSSEHSMVKEAALYTLGAIAEKNVYCQQTLCTSELFEDLTWFLSNDSNINLKRMSVYVILVLVSNNRTGQTLVRETGCITVLSRLFRTVISKHELDLSDKNVFQSYQLWSSVCSTLCVCVNNPQNDENQMFCCSLFPHANEWLKNCTTPEIIRPICSFIGLTLANNTYVQKYFVSVGGLDVLSQVLMQLESDSHETLSSAKLAVVVTKTVDACIADNPTFGIVLSKYHIVSKLLALLLHESLDSGEKFSIMLTLGHCTEDCEENQYDLFKNNGLPLMIQALTESQNEELNKAATFVLHNCKKITEKLSLSLGEYPFDENETQQLKDISVKENNLEEHWRKAKEILHRIEQLEREGNEEEIQRENYQDNISSMNISIQNTWKHLHADRIGRGSKAEDEDKSHSRQLQSYKSHGVMSKACTNDDQMKTPLKSANPVHACYRESEQNKTLYKAKSSCNQNLHEETTFEKNFVSQSSDHVFKHPVHIAKNIKQQLPVTDPFTLCSDIINKEVVSFLATPSCSEMLTYRCSGCIAVEKSLNSRNFSKLLHSCPYQCDRHKVIVEAEDRYKSELRKSLICNKKILLTPRRRQRLSNESTTPGGIKKRRIRKNFTEEEVNYLFNGVKKMGNHWNSILWSFPFQQGRKAVDLAHKYHKLTKHPTCAAS.

ARM repeat units lie at residues 101-144 (ELFE…RETG) and 339-382 (NGLP…GEYP). The stretch at 398–446 (ENNLEEHWRKAKEILHRIEQLEREGNEEEIQRENYQDNISSMNISIQNT) forms a coiled coil. A compositionally biased stretch (basic and acidic residues) spans 457–468 (RGSKAEDEDKSH). The segment at 457–493 (RGSKAEDEDKSHSRQLQSYKSHGVMSKACTNDDQMKT) is disordered. The interval 523-662 (QNLHEETTFE…QRLSNESTTP (140 aa)) is interaction with TERF1. T648 carries the post-translational modification Phosphothreonine. In terms of domain architecture, Myb-like spans 666 to 719 (KKRRIRKNFTEEEVNYLFNGVKKMGNHWNSILWSFPFQQGRKAVDLAHKYHKLT).

Belongs to the TERB1 family. In terms of assembly, component of the MAJIN-TERB1-TERB2 complex, composed of MAJIN, TERB1 and TERB2. Interacts with TERF1, STAG3 and SUN1. Interacts (via Myb-like domain) with the cohesin complex; probably mediated via interaction with STAG3. In terms of processing, phosphorylated by CDK. Phosphorylation by CDK takes place in late prophase when the cap exchange is prominent. is important for the stabilization of telomere attachment but dispenable for the cap exchange.

It is found in the chromosome. Its subcellular location is the telomere. It localises to the nucleus inner membrane. Its function is as follows. Meiosis-specific telomere-associated protein involved in meiotic telomere attachment to the nucleus inner membrane, a crucial step for homologous pairing and synapsis. Component of the MAJIN-TERB1-TERB2 complex, which promotes telomere cap exchange by mediating attachment of telomeric DNA to the inner nuclear membrane and replacement of the protective cap of telomeric chromosomes: in early meiosis, the MAJIN-TERB1-TERB2 complex associates with telomeric DNA and the shelterin/telosome complex. During prophase, the complex matures and promotes release of the shelterin/telosome complex from telomeric DNA. In the MAJIN-TERB1-TERB2 complex, TERB1 probably mediates association with the shelterin/telosome complex via interaction with TERF1, promoting priming telomeric DNA attachment'. Promotes telomere association with the nuclear envelope and deposition of the SUN-KASH/LINC complex. Also recruits cohesin to telomeres to develop structural rigidity. This is Telomere repeats-binding bouquet formation protein 1 from Homo sapiens (Human).